A 383-amino-acid polypeptide reads, in one-letter code: Adaptive-response sensory kinase SasA (383 aa).

A Histidine kinase domain is found at 152–365; the sequence is MVAHELRTPL…CFTFNVPIWQ (214 aa). Position 155 is a phosphohistidine; by autocatalysis (His-155).

As to quaternary structure, homooligomerizes. Interacts with KaiC. Participates in the KaiABC clock complex, whose core is composed of a KaiC homohexamer, 6 KaiB and up to 6 KaiA dimers. SasA and KaiB(fs) compete to bind to KaiC.

The catalysed reaction is ATP + protein L-histidine = ADP + protein N-phospho-L-histidine.. In terms of biological role, member of the two-component regulatory system SasA/RpaA involved in genome-wide circadian gene expression. One of several clock output pathways. Participates in the Kai clock protein complex, the main circadian regulator in cyanobacteria, via its interaction with KaiC. KaiC enhances the autophosphorylation activity of SasA, which then transfers its phosphate group to RpaA to activate it. In addition to its output function, recruits fold-shifted KaiB (KaiB(fs)) to KaiC to cooperatively form the KaiB(6):KaiC(6) complex (independent of SasA kinase activity). Required for robustness of the circadian rhythm of gene expression and is involved in clock output, also required for adaptation to light/dark cycles. This chain is Adaptive-response sensory kinase SasA, found in Synechococcus sp. (strain CC9311).